The sequence spans 123 residues: Double-stranded DNA deaminase immunity protein (123 aa).

The toxic domain forms a 1:1 complex with the DddI immunity protein. This protein blocks the active site of the toxin.

Functionally, immunity protein component of a toxin-immunity protein module, which functions as a cellular contact-dependent growth inhibition (CDI) system. CDI modules allow bacteria to communicate with and inhibit the growth of closely related neighboring bacteria in a contact-dependent fashion. Bacteria that have this module inhibit or kill bacteria without it, giving them a growth advantage. Specifically inhibits the toxic activity of cognate toxin DddA (C-terminal 163 residue fragment) upon expression in E.coli. The polypeptide is Double-stranded DNA deaminase immunity protein (Burkholderia cenocepacia (strain H111)).